A 234-amino-acid chain; its full sequence is 2-C-methyl-D-erythritol 4-phosphate cytidylyltransferase (234 aa).

This sequence belongs to the IspD/TarI cytidylyltransferase family. IspD subfamily.

The enzyme catalyses 2-C-methyl-D-erythritol 4-phosphate + CTP + H(+) = 4-CDP-2-C-methyl-D-erythritol + diphosphate. It functions in the pathway isoprenoid biosynthesis; isopentenyl diphosphate biosynthesis via DXP pathway; isopentenyl diphosphate from 1-deoxy-D-xylulose 5-phosphate: step 2/6. Catalyzes the formation of 4-diphosphocytidyl-2-C-methyl-D-erythritol from CTP and 2-C-methyl-D-erythritol 4-phosphate (MEP). The chain is 2-C-methyl-D-erythritol 4-phosphate cytidylyltransferase from Syntrophus aciditrophicus (strain SB).